A 297-amino-acid chain; its full sequence is TGF-beta receptor type-2 (297 aa).

The N-terminal stretch at 1–23 is a signal peptide; sequence MGRGLLGGLWPLHVVLWTRIAST. The Extracellular segment spans residues 24 to 166; it reads IPPHVPKSVN…NPDLLLVIFQ (143 aa). Cystine bridges form between Cys51–Cys84, Cys54–Cys71, Cys61–Cys67, Cys77–Cys101, Cys121–Cys136, and Cys138–Cys143. N-linked (GlcNAc...) asparagine glycans are attached at residues Asn70 and Asn94. The chain crosses the membrane as a helical span at residues 167-187; the sequence is VTGVSLLPPLGIAIAVIITFY. Topologically, residues 188–297 are cytoplasmic; it reads CYRVHRQQKL…KTEKDIFSDL (110 aa). In terms of domain architecture, Protein kinase spans 244-297; it reads IELDTLVGKGRFAEVYKAKLRQNTSEQFETVAVKIFPYEEYASWKTEKDIFSDL. ATP contacts are provided by residues 250 to 258 and Lys277; that span reads VGKGRFAEV.

It belongs to the protein kinase superfamily. TKL Ser/Thr protein kinase family. TGFB receptor subfamily. As to quaternary structure, homodimer. Heterohexamer; TGFB1, TGFB2 and TGFB3 homodimeric ligands assemble a functional receptor composed of two TGFBR1 and TGFBR2 heterodimers to form a ligand-receptor heterohexamer. The respective affinity of TGFRB1 and TGFRB2 for the ligands may modulate the kinetics of assembly of the receptor and may explain the different biological activities of TGFB1, TGFB2 and TGFB3. Component of a complex composed of TSC22D1 (via N-terminus), TGFBR1 and TGFBR2; the interaction between TSC22D1 and TGFBR1 is inhibited by SMAD7 and promoted by TGFB1. Interacts with DAXX. Interacts with DYNLT4. Interacts with ZFYVE9; ZFYVE9 recruits SMAD2 and SMAD3 to the TGF-beta receptor. Interacts with and is activated by SCUBE3; this interaction does not affect TGFB1-binding to TGFBR2. Interacts with VPS39; this interaction is independent of the receptor kinase activity and of the presence of TGF-beta. Interacts with CLU. Mg(2+) serves as cofactor. Requires Mn(2+) as cofactor. Phosphorylated on a Ser/Thr residue in the cytoplasmic domain.

It is found in the cell membrane. Its subcellular location is the membrane raft. The catalysed reaction is L-threonyl-[receptor-protein] + ATP = O-phospho-L-threonyl-[receptor-protein] + ADP + H(+). The enzyme catalyses L-seryl-[receptor-protein] + ATP = O-phospho-L-seryl-[receptor-protein] + ADP + H(+). Transmembrane serine/threonine kinase forming with the TGF-beta type I serine/threonine kinase receptor, TGFBR1, the non-promiscuous receptor for the TGF-beta cytokines TGFB1, TGFB2 and TGFB3. Transduces the TGFB1, TGFB2 and TGFB3 signal from the cell surface to the cytoplasm and is thus regulating a plethora of physiological and pathological processes including cell cycle arrest in epithelial and hematopoietic cells, control of mesenchymal cell proliferation and differentiation, wound healing, extracellular matrix production, immunosuppression and carcinogenesis. The formation of the receptor complex composed of 2 TGFBR1 and 2 TGFBR2 molecules symmetrically bound to the cytokine dimer results in the phosphorylation and the activation of TGFRB1 by the constitutively active TGFBR2. Activated TGFBR1 phosphorylates SMAD2 which dissociates from the receptor and interacts with SMAD4. The SMAD2-SMAD4 complex is subsequently translocated to the nucleus where it modulates the transcription of the TGF-beta-regulated genes. This constitutes the canonical SMAD-dependent TGF-beta signaling cascade. Also involved in non-canonical, SMAD-independent TGF-beta signaling pathways. The protein is TGF-beta receptor type-2 (TGFBR2) of Sus scrofa (Pig).